Consider the following 375-residue polypeptide: uncharacterized protein (375 aa).

Residue lysine 99 forms an Isoglutamyl lysine isopeptide (Lys-Gln) (interchain with Q-Cter in protein Pup) linkage.

This sequence belongs to the IMPDH/GMPR family.

This is an uncharacterized protein from Mycolicibacterium smegmatis (strain ATCC 700084 / mc(2)155) (Mycobacterium smegmatis).